Reading from the N-terminus, the 405-residue chain is Arginine deiminase (405 aa).

The active-site Amidino-cysteine intermediate is cysteine 395.

Belongs to the arginine deiminase family.

It localises to the cytoplasm. The enzyme catalyses L-arginine + H2O = L-citrulline + NH4(+). It participates in amino-acid degradation; L-arginine degradation via ADI pathway; carbamoyl phosphate from L-arginine: step 1/2. The polypeptide is Arginine deiminase (Rhodococcus jostii (strain RHA1)).